An 817-amino-acid chain; its full sequence is Kinesin-like protein 2 (817 aa).

The segment at 1–155 (MEEEGHKSLT…YNDEKSVNAS (155 aa)) is disordered. Residues 8–23 (SLTSHLPQSSSSLSQS) are compositionally biased toward low complexity. The segment covering 39-60 (IKTNSSSSNILKPRLSLQNEVN) has biased composition (polar residues). Over residues 76-86 (SLASVKSSSLA) the composition is skewed to low complexity. Polar residues predominate over residues 106–116 (PISSRSVSASS). The segment covering 122 to 132 (ASAVSSSLNSS) has biased composition (low complexity). A coiled-coil region spans residues 155-242 (SALRTTEDRL…VSQKGMESLE (88 aa)). 10 residues coordinate ATP: Asn-473, Arg-475, Arg-479, Glu-543, Gly-566, Ser-567, Gly-568, Lys-569, Thr-570, and Thr-778. One can recognise a Kinesin motor domain in the interval 473-807 (NIRVFCRVRP…LRFATKVNNT (335 aa)).

The protein belongs to the TRAFAC class myosin-kinesin ATPase superfamily. Kinesin family. NCD subfamily.

It localises to the cytoplasm. It is found in the cytoskeleton. The protein resides in the spindle. The protein localises to the nucleus. The enzyme catalyses ATP + H2O = ADP + phosphate + H(+). It catalyses the reaction ATP + H2O + a kinesin associated with a microtubule at position (n) = ADP + phosphate + a kinesin associated with a microtubule at position (n-1, toward the minus end).. In terms of biological role, minus end-directed microtubule (MT) motor that is involved in spindle microtubule shortening, kinetochore capture, and polarization of cytoplasmic microtubules. During mitosis, promotes spindle microtubule shortening by depolymerization. During metaphase, involved in the recapture of kinetochores displaced from the spindle and their transport towards the spindle pole body; promotes transport both by microtubule end-on pulling and by lateral sliding along the side of the microtubule. During interphase, required for the polarization of cytoplasmic microtubules where it orients the microtubule plus ends toward the cell ends and the minus ends toward the cell center. Required for karyogamy. This is Kinesin-like protein 2 from Schizosaccharomyces pombe (strain 972 / ATCC 24843) (Fission yeast).